Consider the following 222-residue polypeptide: LexA repressor (222 aa).

The H-T-H motif DNA-binding region spans I28–K48. Active-site for autocatalytic cleavage activity residues include S135 and K172.

Belongs to the peptidase S24 family. Homodimer.

It carries out the reaction Hydrolysis of Ala-|-Gly bond in repressor LexA.. Functionally, represses a number of genes involved in the response to DNA damage (SOS response), including recA and lexA. In the presence of single-stranded DNA, RecA interacts with LexA causing an autocatalytic cleavage which disrupts the DNA-binding part of LexA, leading to derepression of the SOS regulon and eventually DNA repair. In Myxococcus xanthus (strain DK1622), this protein is LexA repressor.